The primary structure comprises 864 residues: Protein translocase subunit SecA (864 aa).

ATP is bound by residues Q85, 103–107, and D542; that span reads GEGKT.

Belongs to the SecA family. As to quaternary structure, monomer and homodimer. Part of the essential Sec protein translocation apparatus which comprises SecA, SecYEG and auxiliary proteins SecDF. Other proteins may also be involved.

It is found in the cell inner membrane. It localises to the cytoplasm. It carries out the reaction ATP + H2O + cellular proteinSide 1 = ADP + phosphate + cellular proteinSide 2.. Part of the Sec protein translocase complex. Interacts with the SecYEG preprotein conducting channel. Has a central role in coupling the hydrolysis of ATP to the transfer of proteins into and across the cell membrane, serving as an ATP-driven molecular motor driving the stepwise translocation of polypeptide chains across the membrane. This chain is Protein translocase subunit SecA, found in Fervidobacterium nodosum (strain ATCC 35602 / DSM 5306 / Rt17-B1).